A 156-amino-acid polypeptide reads, in one-letter code: Small ribosomal subunit protein uS7 (156 aa).

Belongs to the universal ribosomal protein uS7 family. As to quaternary structure, part of the 30S ribosomal subunit. Contacts proteins S9 and S11.

In terms of biological role, one of the primary rRNA binding proteins, it binds directly to 16S rRNA where it nucleates assembly of the head domain of the 30S subunit. Is located at the subunit interface close to the decoding center, probably blocks exit of the E-site tRNA. This Streptococcus sanguinis (strain SK36) protein is Small ribosomal subunit protein uS7.